The following is a 217-amino-acid chain: Deoxyribose-phosphate aldolase 1 (217 aa).

Aspartate 89 acts as the Proton donor/acceptor in catalysis. The Schiff-base intermediate with acetaldehyde role is filled by lysine 151. Residue lysine 180 is the Proton donor/acceptor of the active site.

It belongs to the DeoC/FbaB aldolase family. DeoC type 1 subfamily.

It localises to the cytoplasm. It catalyses the reaction 2-deoxy-D-ribose 5-phosphate = D-glyceraldehyde 3-phosphate + acetaldehyde. Its pathway is carbohydrate degradation; 2-deoxy-D-ribose 1-phosphate degradation; D-glyceraldehyde 3-phosphate and acetaldehyde from 2-deoxy-alpha-D-ribose 1-phosphate: step 2/2. Its function is as follows. Catalyzes a reversible aldol reaction between acetaldehyde and D-glyceraldehyde 3-phosphate to generate 2-deoxy-D-ribose 5-phosphate. This Cutibacterium acnes (strain DSM 16379 / KPA171202) (Propionibacterium acnes) protein is Deoxyribose-phosphate aldolase 1.